We begin with the raw amino-acid sequence, 75 residues long: MARYFRRRKFCRFKAEGVQQIDYKDLATLRNYVTESGKIVPSRITGTSAKYQRQLATAIKRARYLALLPYTDLHK.

The protein belongs to the bacterial ribosomal protein bS18 family. As to quaternary structure, part of the 30S ribosomal subunit. Forms a tight heterodimer with protein bS6.

Binds as a heterodimer with protein bS6 to the central domain of the 16S rRNA, where it helps stabilize the platform of the 30S subunit. This Pseudoalteromonas translucida (strain TAC 125) protein is Small ribosomal subunit protein bS18.